Consider the following 160-residue polypeptide: 3-dehydroquinate dehydratase (160 aa).

Residue Tyr22 is the Proton acceptor of the active site. Asn73, His79, and Asp86 together coordinate substrate. His99 (proton donor) is an active-site residue. Residues 100-101 (IS) and Arg110 each bind substrate.

Belongs to the type-II 3-dehydroquinase family. Homododecamer.

The enzyme catalyses 3-dehydroquinate = 3-dehydroshikimate + H2O. It participates in metabolic intermediate biosynthesis; chorismate biosynthesis; chorismate from D-erythrose 4-phosphate and phosphoenolpyruvate: step 3/7. In terms of biological role, catalyzes a trans-dehydration via an enolate intermediate. The chain is 3-dehydroquinate dehydratase from Sulfurimonas denitrificans (strain ATCC 33889 / DSM 1251) (Thiomicrospira denitrificans (strain ATCC 33889 / DSM 1251)).